An 83-amino-acid polypeptide reads, in one-letter code: Type 3 secretion system needle filament protein (83 aa).

It belongs to the SctF family. As to quaternary structure, the core secretion machinery of the T3SS is composed of approximately 20 different proteins, including cytoplasmic components, a base, an export apparatus and a needle. This subunit polymerizes and forms the helical needle filament. Interacts with the needle tip protein IpaD/SctA. Interacts with the export apparatus components SpaP/SctR, SpaQ/SctS and SpaR/SctT.

It localises to the secreted. Its subcellular location is the cell surface. In terms of biological role, component of the type III secretion system (T3SS), also called injectisome, which is used to inject bacterial effector proteins into eukaryotic host cells. MxiH/SctF forms the external needle filament that protrudes from the bacterial surface. Functionally, during infection, can induce innate immune responses. The needle proteins interact with host TLR2 or TLR4, and induce signaling by NF-kappa-B and/or AP-1. This activation is MyD88 dependent and results in increased expression of cytokines, including TNF-alpha, IL-6 and IL-8. The chain is Type 3 secretion system needle filament protein from Shigella flexneri.